A 49-amino-acid chain; its full sequence is Large ribosomal subunit protein bL33 (49 aa).

This sequence belongs to the bacterial ribosomal protein bL33 family.

The sequence is that of Large ribosomal subunit protein bL33 from Lacticaseibacillus casei (strain BL23) (Lactobacillus casei).